A 438-amino-acid polypeptide reads, in one-letter code: chitinase-like effector (438 aa).

The signal sequence occupies residues 1–23 (MFTPLSSVTALLALSSAFLGAQA). Residues 54-437 (FIAKGYYTGW…DAIRSGAGLS (384 aa)) form the GH18 domain. Trp-416 contributes to the chitin binding site.

It belongs to the glycosyl hydrolase 18 family.

It localises to the secreted. Its function is as follows. Catalytically impaired chitinase that binds efficiently to chitin, but not to chitosan, xylan, or cellulose. Despite the lack of chitinolytic activity, retains substrate binding specificity and acts as an effector to prevent chitin-triggered immunity by sequestering immunogenic chitin fragments. Does not function in the protection of fungal cell wall against plant hydrolytic enzymes. This chain is chitinase-like effector, found in Moniliophthora perniciosa (Witches'-broom disease fungus).